A 458-amino-acid chain; its full sequence is Probable alpha-L-glutamate ligase (458 aa).

The unknown stretch occupies residues 1-162 (MSDNKFIIGS…YGVKTAKKSG (162 aa)). Positions 163–458 (LKIGLLASNP…IEKKLGWKAD (296 aa)) are alpha-L-glutamate ligase. Residues 267–450 (LQLLQKNNLD…IAGAMIESIE (184 aa)) form the ATP-grasp domain. ATP contacts are provided by residues Lys304, 341–342 (EF), Asp350, and 374–376 (RAN). Residues Asp411, Glu423, and Asn425 each contribute to the Mg(2+) site. Mn(2+) is bound by residues Asp411, Glu423, and Asn425.

In the C-terminal section; belongs to the RimK family. Mg(2+) is required as a cofactor. Requires Mn(2+) as cofactor.

This Shewanella pealeana (strain ATCC 700345 / ANG-SQ1) protein is Probable alpha-L-glutamate ligase.